Reading from the N-terminus, the 201-residue chain is ATP-dependent Clp protease proteolytic subunit (201 aa).

Residue Ser101 is the Nucleophile of the active site. His126 is a catalytic residue.

This sequence belongs to the peptidase S14 family. Component of the chloroplastic Clp protease core complex.

The protein localises to the plastid. Its subcellular location is the chloroplast stroma. The enzyme catalyses Hydrolysis of proteins to small peptides in the presence of ATP and magnesium. alpha-casein is the usual test substrate. In the absence of ATP, only oligopeptides shorter than five residues are hydrolyzed (such as succinyl-Leu-Tyr-|-NHMec, and Leu-Tyr-Leu-|-Tyr-Trp, in which cleavage of the -Tyr-|-Leu- and -Tyr-|-Trp bonds also occurs).. Cleaves peptides in various proteins in a process that requires ATP hydrolysis. Has a chymotrypsin-like activity. Plays a major role in the degradation of misfolded proteins. In Chlorella vulgaris (Green alga), this protein is ATP-dependent Clp protease proteolytic subunit.